The following is a 458-amino-acid chain: uncharacterized protein (458 aa).

Residues 1–10 (MQAEPKKSQA) are compositionally biased toward basic and acidic residues. The disordered stretch occupies residues 1-20 (MQAEPKKSQAEQRAVAEPVS). The TRAM domain occupies 23-84 (VSLVGEEYEV…ARFLRADAVE (62 aa)). [4Fe-4S] cluster contacts are provided by C97, C105, C108, and C193. S-adenosyl-L-methionine is bound by residues Q287, Y316, E340, and D384. The active-site Nucleophile is the C411.

It belongs to the class I-like SAM-binding methyltransferase superfamily. RNA M5U methyltransferase family.

This is an uncharacterized protein from Streptomyces coelicolor (strain ATCC BAA-471 / A3(2) / M145).